The primary structure comprises 280 residues: Keratin, type I cytoskeletal 47 kDa (280 aa).

The segment at Met-1–Asn-81 is head. Residues Asp-82–Trp-117 are coil 1A. The IF rod domain maps to Asp-82–Lys-280. The linker 1 stretch occupies residues Tyr-118–Ile-139. The coil 1B stretch occupies residues Ile-140–Ala-231. Residues Lys-232–Ile-254 are linker 12. Residues Leu-255–Lys-280 form a coil 2 region.

This sequence belongs to the intermediate filament family. Heterotetramer of two type I and two type II keratins.

In Xenopus laevis (African clawed frog), this protein is Keratin, type I cytoskeletal 47 kDa (xk81b1).